A 419-amino-acid polypeptide reads, in one-letter code: Hyaluronan synthase (419 aa).

Helical transmembrane passes span Leu8–Phe28, Val33–Leu53, Ile318–Gly338, Ala345–Leu365, and Pro376–Leu396.

It belongs to the NodC/HAS family. It depends on Mg(2+) as a cofactor.

It is found in the cell membrane. It catalyses the reaction [hyaluronan](n) + UDP-N-acetyl-alpha-D-glucosamine = N-acetyl-beta-D-glucosaminyl-(1-&gt;4)-[hyaluronan](n) + UDP + H(+). The catalysed reaction is N-acetyl-beta-D-glucosaminyl-(1-&gt;4)-[hyaluronan](n) + UDP-alpha-D-glucuronate = [hyaluronan](n+1) + UDP + H(+). The protein operates within glycan biosynthesis; hyaluronan biosynthesis. Functionally, glycosaminoglycan synthesis. The hyaluronic acid capsule is involved in the pathogenicity of group A Streptococci; it may be the major virulence determinant. In Streptococcus pyogenes serotype M18 (strain MGAS8232), this protein is Hyaluronan synthase (hasA).